Here is a 435-residue protein sequence, read N- to C-terminus: Putative GMP synthase [glutamine-hydrolyzing] 2 (435 aa).

The region spanning 1–120 (MKQDMIVILD…VFDTCQAEAN (120 aa)) is the Glutamine amidotransferase type-1; truncated domain. The GMPS ATP-PPase domain maps to 121–310 (WNMANFVNDQ…LGLPYEMVYR (190 aa)). 148–154 (SGGVDSS) lines the ATP pocket.

Homodimer.

The catalysed reaction is XMP + L-glutamine + ATP + H2O = GMP + L-glutamate + AMP + diphosphate + 2 H(+). It participates in purine metabolism; GMP biosynthesis; GMP from XMP (L-Gln route): step 1/1. Its function is as follows. Catalyzes the synthesis of GMP from XMP. In Bacteroides thetaiotaomicron (strain ATCC 29148 / DSM 2079 / JCM 5827 / CCUG 10774 / NCTC 10582 / VPI-5482 / E50), this protein is Putative GMP synthase [glutamine-hydrolyzing] 2 (guaA2).